The chain runs to 373 residues: MVKYDAVILGSGVLGLSIANELTLKGLKVAVVGNDLPEDLDSTGFASPWAGANWHSFAINEAERRRDQYTFEQFARLAKEIPHLCERRAYYYLWKGEGAWKEPWYKDVVFGYRMLKPEEVHAPFKYGVTYEAYTLNTPLYLLHLASTLRSARVPILRARLSSLDEAYSLPQLGSVDLVINATGLGARSLLGVEDPTVYPAKGQTVLVRAPVKECYGLVDPLAQPGQKAYIIPRPGPDGYVILGGCYFPNDWSTNVNPEVAEEILKQCHTLCPRLDGKGGKGTWKDIEVISHNVGLRPVREAGLRCEVEERVIGEKVNAGLATKGGKVGGGRKVGVVHAYGIGPAGYQASLGIAKEVGELVDGWMKKSNKKAKL.

An N-terminal signal peptide occupies residues 1-19; it reads MVKYDAVILGSGVLGLSIA. Residues S11, L14, D35, A46, S47, G51, and N53 each coordinate FAD. F57 serves as a coordination point for anthranilate. The N-linked (GlcNAc...) asparagine glycan is linked to N180. C214 and C271 are disulfide-bonded. The anthranilate site is built by Y229, Y246, and R296. (R)-lactate contacts are provided by Y229, Y246, and R296. Residues R296, G342, G345, Y346, and Q347 each contribute to the FAD site. Positions 371 to 373 match the Microbody targeting signal motif; sequence AKL.

Belongs to the DAMOX/DASOX family. FAD is required as a cofactor.

The protein resides in the peroxisome matrix. It catalyses the reaction a D-alpha-amino acid + O2 + H2O = a 2-oxocarboxylate + H2O2 + NH4(+). Its function is as follows. Catalyzes the oxidative deamination of D-amino acids with broad substrate specificity. Enables the organism to utilize D-amino acids as a source of nutrients. Enables the organism to utilize D-glutamate and D-methionine as a nitrogen source. Protects the organism from the toxicity of D-amino acids, including from D-glutamate. May play a role in its interaction with the host. The sequence is that of D-amino-acid oxidase 3 from Cryptococcus neoformans var. grubii serotype A (strain H99 / ATCC 208821 / CBS 10515 / FGSC 9487) (Filobasidiella neoformans var. grubii).